The sequence spans 423 residues: Histidine--tRNA ligase (423 aa).

This sequence belongs to the class-II aminoacyl-tRNA synthetase family. Homodimer.

It localises to the cytoplasm. The enzyme catalyses tRNA(His) + L-histidine + ATP = L-histidyl-tRNA(His) + AMP + diphosphate + H(+). The protein is Histidine--tRNA ligase of Actinobacillus succinogenes (strain ATCC 55618 / DSM 22257 / CCUG 43843 / 130Z).